The following is a 498-amino-acid chain: Glycerol kinase (498 aa).

Threonine 12 is a binding site for ADP. ATP-binding residues include threonine 12, threonine 13, and serine 14. Sn-glycerol 3-phosphate is bound at residue threonine 12. Arginine 16 contacts ADP. Sn-glycerol 3-phosphate contacts are provided by arginine 82, glutamate 83, tyrosine 134, and aspartate 244. Positions 82, 83, 134, 244, and 245 each coordinate glycerol. ADP is bound by residues threonine 266 and glycine 310. The ATP site is built by threonine 266, glycine 310, glutamine 314, and glycine 411. ADP contacts are provided by glycine 411 and asparagine 415.

This sequence belongs to the FGGY kinase family.

The catalysed reaction is glycerol + ATP = sn-glycerol 3-phosphate + ADP + H(+). The protein operates within polyol metabolism; glycerol degradation via glycerol kinase pathway; sn-glycerol 3-phosphate from glycerol: step 1/1. With respect to regulation, inhibited by fructose 1,6-bisphosphate (FBP). Functionally, key enzyme in the regulation of glycerol uptake and metabolism. Catalyzes the phosphorylation of glycerol to yield sn-glycerol 3-phosphate. The protein is Glycerol kinase of Chloroflexus aggregans (strain MD-66 / DSM 9485).